A 167-amino-acid chain; its full sequence is Cell number regulator 3 (167 aa).

A helical membrane pass occupies residues 67-84; the sequence is GMTSCGTSAALFALIQWL.

It belongs to the cornifelin family. Expressed only in pollen.

It localises to the membrane. The sequence is that of Cell number regulator 3 (CNR3) from Zea mays (Maize).